The following is a 405-amino-acid chain: Secreted aspartic protease FUS4 (405 aa).

A signal peptide spans 1-24 (MLAIATLHVALQVFGAFSLSHAAA). One can recognise a Peptidase A1 domain in the interval 49–400 (YLFNVTVGSP…NFEERSFGLA (352 aa)). Asn-52, Asn-61, Asn-107, and Asn-123 each carry an N-linked (GlcNAc...) asparagine glycan. Cys-318 and Cys-356 are oxidised to a cystine.

Belongs to the peptidase A1 family.

It is found in the secreted. Functionally, secreted aspartic protease; part of the gene cluster that mediates the biosynthesis of the mycotoxin fusarin C. Within the cluster, FUS1, FUS2, FUS8 and FUS9 are sufficient for fusarin production. The other FUS cluster members are not essential for fusarin C biosynthesis. This chain is Secreted aspartic protease FUS4, found in Gibberella fujikuroi (strain CBS 195.34 / IMI 58289 / NRRL A-6831) (Bakanae and foot rot disease fungus).